The sequence spans 1035 residues: Beta-galactosidase (1035 aa).

2 residues coordinate substrate: N101 and D199. Residue D199 coordinates Na(+). The Mg(2+) site is built by E415, H417, and E460. Substrate is bound by residues E460 and 540 to 543 (EYAH). E460 serves as the catalytic Proton donor. The active-site Nucleophile is the E540. A Mg(2+)-binding site is contributed by N600. Residues F604 and N607 each contribute to the Na(+) site. Positions 607 and 1011 each coordinate substrate.

It belongs to the glycosyl hydrolase 2 family. As to quaternary structure, homotetramer. The cofactor is Mg(2+). Na(+) serves as cofactor.

It catalyses the reaction Hydrolysis of terminal non-reducing beta-D-galactose residues in beta-D-galactosides.. In Psychromonas ingrahamii (strain DSM 17664 / CCUG 51855 / 37), this protein is Beta-galactosidase.